The chain runs to 475 residues: Ribulose bisphosphate carboxylase large chain (475 aa).

The propeptide occupies 1-2 (MS). Pro-3 is subject to N-acetylproline. Position 14 is an N6,N6,N6-trimethyllysine (Lys-14). Substrate is bound by residues Asn-123 and Thr-173. The active-site Proton acceptor is Lys-175. Residue Lys-177 coordinates substrate. Residues Lys-201, Asp-203, and Glu-204 each contribute to the Mg(2+) site. Position 201 is an N6-carboxylysine (Lys-201). His-294 acts as the Proton acceptor in catalysis. Residues Arg-295, His-327, and Ser-379 each coordinate substrate.

The protein belongs to the RuBisCO large chain family. Type I subfamily. In terms of assembly, heterohexadecamer of 8 large chains and 8 small chains; disulfide-linked. The disulfide link is formed within the large subunit homodimers. Mg(2+) serves as cofactor. The disulfide bond which can form in the large chain dimeric partners within the hexadecamer appears to be associated with oxidative stress and protein turnover.

It localises to the plastid. The protein localises to the chloroplast. The catalysed reaction is 2 (2R)-3-phosphoglycerate + 2 H(+) = D-ribulose 1,5-bisphosphate + CO2 + H2O. The enzyme catalyses D-ribulose 1,5-bisphosphate + O2 = 2-phosphoglycolate + (2R)-3-phosphoglycerate + 2 H(+). Functionally, ruBisCO catalyzes two reactions: the carboxylation of D-ribulose 1,5-bisphosphate, the primary event in carbon dioxide fixation, as well as the oxidative fragmentation of the pentose substrate in the photorespiration process. Both reactions occur simultaneously and in competition at the same active site. The polypeptide is Ribulose bisphosphate carboxylase large chain (Pinus koraiensis (Korean pine)).